Here is a 728-residue protein sequence, read N- to C-terminus: Fatty acid oxidation complex subunit alpha (728 aa).

The segment at 1–189 (MLYQSETIQV…KNGLIDAVVP (189 aa)) is enoyl-CoA hydratase/isomerase. Asp296 serves as a coordination point for substrate. The tract at residues 311–728 (TIPEYAAVLG…TIAVSTGKTA (418 aa)) is 3-hydroxyacyl-CoA dehydrogenase. NAD(+)-binding positions include Met324, Asp343, 400–402 (VVE), Lys407, and Ser429. His450 functions as the For 3-hydroxyacyl-CoA dehydrogenase activity in the catalytic mechanism. Asn453 contacts NAD(+). Residues Asn500 and Tyr660 each contribute to the substrate site.

In the N-terminal section; belongs to the enoyl-CoA hydratase/isomerase family. It in the C-terminal section; belongs to the 3-hydroxyacyl-CoA dehydrogenase family. Heterotetramer of two alpha chains (FadB) and two beta chains (FadA).

The enzyme catalyses a (3S)-3-hydroxyacyl-CoA + NAD(+) = a 3-oxoacyl-CoA + NADH + H(+). It carries out the reaction a (3S)-3-hydroxyacyl-CoA = a (2E)-enoyl-CoA + H2O. The catalysed reaction is a 4-saturated-(3S)-3-hydroxyacyl-CoA = a (3E)-enoyl-CoA + H2O. It catalyses the reaction (3S)-3-hydroxybutanoyl-CoA = (3R)-3-hydroxybutanoyl-CoA. The enzyme catalyses a (3Z)-enoyl-CoA = a 4-saturated (2E)-enoyl-CoA. It carries out the reaction a (3E)-enoyl-CoA = a 4-saturated (2E)-enoyl-CoA. It functions in the pathway lipid metabolism; fatty acid beta-oxidation. Functionally, involved in the aerobic and anaerobic degradation of long-chain fatty acids via beta-oxidation cycle. Catalyzes the formation of 3-oxoacyl-CoA from enoyl-CoA via L-3-hydroxyacyl-CoA. It can also use D-3-hydroxyacyl-CoA and cis-3-enoyl-CoA as substrate. The protein is Fatty acid oxidation complex subunit alpha of Photorhabdus laumondii subsp. laumondii (strain DSM 15139 / CIP 105565 / TT01) (Photorhabdus luminescens subsp. laumondii).